We begin with the raw amino-acid sequence, 91 residues long: Small ribosomal subunit protein uS19 (91 aa).

Belongs to the universal ribosomal protein uS19 family.

Its function is as follows. Protein S19 forms a complex with S13 that binds strongly to the 16S ribosomal RNA. The polypeptide is Small ribosomal subunit protein uS19 (Opitutus terrae (strain DSM 11246 / JCM 15787 / PB90-1)).